Here is a 66-residue protein sequence, read N- to C-terminus: uncharacterized protein (66 aa).

The next 2 helical transmembrane spans lie at 6–26 (KIIM…HFVG) and 39–59 (VTFF…SILL).

Its subcellular location is the cell membrane. This is an uncharacterized protein from Bacillus subtilis (strain 168).